The chain runs to 191 residues: Transposon Tn1546 resolvase (191 aa).

The Resolvase/invertase-type recombinase catalytic domain maps to 2 to 138; the sequence is RKIGYIRVSS…EGIELAKKEG (137 aa). Catalysis depends on S10, which acts as the O-(5'-phospho-DNA)-serine intermediate. The segment at residues 168-187 is a DNA-binding region (H-T-H motif); the sequence is VNQICEITNVSRASLYRKLS.

This sequence belongs to the site-specific recombinase resolvase family.

Resolvase catalyzes the resolution (a site-specific recombination) of the cointegrated replicon to yield the final transposition products. This is Transposon Tn1546 resolvase from Enterococcus faecium (Streptococcus faecium).